The following is a 370-amino-acid chain: Protein SHI RELATED SEQUENCE 1 (370 aa).

Residues 1 to 37 (MAGFFSLDGGGGGGGGGGNNQEDHRSNTNPPPPVSEA) form a disordered region. The span at 8 to 19 (DGGGGGGGGGGN) shows a compositional bias: gly residues. Zn(2+) is bound by residues Cys-144, Cys-147, Cys-155, Cys-160, Cys-164, and Cys-171. Positions 144-171 (CQDCGNQAKKDCSHMRCRTCCKSRGFEC) form a DNA-binding region, zn(2)-C6 fungal-type; degenerate. A Required for homo- and heterodimerization motif is present at residues 271–274 (IGGH).

Belongs to the SHI protein family. In terms of assembly, forms homodimers and heterodimers with LRP1. In terms of tissue distribution, expressed in flowers, seeds and seedlings.

It localises to the nucleus. Functionally, transcription activator that binds DNA on 5'-ACTCTAC-3' and promotes auxin homeostasis-regulating gene expression (e.g. YUC genes), as well as genes affecting stamen development, cell expansion and timing of flowering. Synergistically with other SHI-related proteins, regulates gynoecium, stamen and leaf development in a dose-dependent manner, controlling apical-basal patterning. Promotes style and stigma formation, and influences vascular development during gynoecium development. May also have a role in the formation and/or maintenance of the shoot apical meristem (SAM). The protein is Protein SHI RELATED SEQUENCE 1 (SRS1) of Arabidopsis thaliana (Mouse-ear cress).